A 423-amino-acid polypeptide reads, in one-letter code: Deferrochelatase (423 aa).

The tat-type signal signal peptide spans 1–35; sequence MQYEDKNGVNEPSRRRLLKGIGALALAGSCPVAHA. Heme b-binding positions include 236–238, H329, 334–336, and R347; these read GTA and NPR.

The protein belongs to the DyP-type peroxidase family. EfeB subfamily. The heme-bound EfeB forms a homodimer whereas the apo-form mainly exists as a monomer. Part of a ferrous iron transporter composed of EfeU, EfeO and EfeB. Requires heme b as cofactor. In terms of processing, predicted to be exported by the Tat system. The position of the signal peptide cleavage has not been experimentally proven.

It is found in the periplasm. It carries out the reaction heme b + 2 H(+) = protoporphyrin IX + Fe(2+). Its function is as follows. Involved in the recovery of exogenous heme iron. Extracts iron from heme while preserving the protoporphyrin ring intact. Also displays peroxidase activity on guaiacol and catechol in vitro. The deferrochelatase activity appears to be closely related to the peroxidation activity, but the link is unclear. The protein is Deferrochelatase (efeB) of Escherichia coli O157:H7.